The primary structure comprises 551 residues: Probable 4-coumarate--CoA ligase 3 (551 aa).

Residues S205, S206, G207, T208, T209, and K213 each coordinate ATP. F253 is a binding site for (E)-4-coumaroyl-AMP. K274 contacts CoA. Residues 276–346 (EPVRFLELIK…RFKGRLVIKQ (71 aa)) are SBD1. (E)-4-coumaroyl-AMP-binding residues include A323, Q346, G347, and T351. 5 residues coordinate ATP: Q346, G347, T351, D430, and R445. The tract at residues 347 to 409 (GYGATELSPC…IKGPNVMLGY (63 aa)) is SBD2. The (E)-4-coumaroyl-AMP site is built by K447 and K451. Residues K453 and G454 each contribute to the CoA site. K537 lines the ATP pocket.

It belongs to the ATP-dependent AMP-binding enzyme family. It depends on Mg(2+) as a cofactor.

The enzyme catalyses (E)-4-coumarate + ATP + CoA = (E)-4-coumaroyl-CoA + AMP + diphosphate. The catalysed reaction is (E)-4-coumarate + ATP + H(+) = (E)-4-coumaroyl-AMP + diphosphate. It carries out the reaction (E)-4-coumaroyl-AMP + CoA = (E)-4-coumaroyl-CoA + AMP + H(+). Its pathway is phytoalexin biosynthesis; 3,4',5-trihydroxystilbene biosynthesis; 3,4',5-trihydroxystilbene from trans-4-coumarate: step 1/2. In terms of biological role, carboxylate--CoA ligase that may use 4-coumarate as substrate. Follows a two-step reaction mechanism, wherein the carboxylate substrate first undergoes adenylation by ATP, followed by a thioesterification in the presence of CoA to yield the final CoA thioester. This chain is Probable 4-coumarate--CoA ligase 3 (4cl3), found in Dictyostelium discoideum (Social amoeba).